A 254-amino-acid polypeptide reads, in one-letter code: Probable transcriptional regulatory protein MAE_13580 (254 aa).

Belongs to the TACO1 family.

Its subcellular location is the cytoplasm. The sequence is that of Probable transcriptional regulatory protein MAE_13580 from Microcystis aeruginosa (strain NIES-843 / IAM M-2473).